The following is a 521-amino-acid chain: FAD-dependent monooxygenase mdpD (521 aa).

Residues 1 to 48 (MTHFPVNIASDKQEFDPERWAKTPTTESSVNGENGTAPTSGLPSRHPS) are disordered. Over residues 11-21 (DKQEFDPERWA) the composition is skewed to basic and acidic residues. The span at 23 to 48 (TPTTESSVNGENGTAPTSGLPSRHPS) shows a compositional bias: polar residues. V94 and R160 together coordinate FAD. Catalysis depends on residues R244 and Y271. 2 residues coordinate FAD: D369 and G382.

Belongs to the paxM FAD-dependent monooxygenase family. FAD is required as a cofactor.

It functions in the pathway secondary metabolite biosynthesis. FAD-dependent monooxygenase; part of the gene cluster that mediates the biosynthesis of monodictyphenone, a prenyl xanthone derivative. The pathway begins with the synthesis of atrochrysone thioester by the polyketide synthase (PKS) mdpG. The atrochrysone carboxyl ACP thioesterase mdpF then breaks the thioester bond and releases the atrochrysone carboxylic acid from mdpG. The atrochrysone carboxylic acid is then converted to atrochrysone which is further transformed into emodin anthrone. The next step is performed by the anthrone oxygenase mdpH that catalyzes the oxidation of emodinanthrone to emodin. Emodin is further modified to yield monodictyphenone via several steps involving mdpB, mdpC mdpJ, mdpK and mdpL. These enzymes with xptA, xptB and xptC are also proposed to be involved in the synthesis of shamixanthone from emodin. Especially, direct reduction of emodin by the short chain dehydrogenase mdpC followed by dehydration catalyzed by the scytalone dehydratase-like protein mdpB gives loss of oxygen and formation of chrysophanol intermediate in two simple steps. This Emericella nidulans (strain FGSC A4 / ATCC 38163 / CBS 112.46 / NRRL 194 / M139) (Aspergillus nidulans) protein is FAD-dependent monooxygenase mdpD.